The following is a 427-amino-acid chain: Glutamate-1-semialdehyde 2,1-aminomutase (427 aa).

Lys-265 is modified (N6-(pyridoxal phosphate)lysine).

The protein belongs to the class-III pyridoxal-phosphate-dependent aminotransferase family. HemL subfamily. In terms of assembly, homodimer. Pyridoxal 5'-phosphate serves as cofactor.

It is found in the cytoplasm. The enzyme catalyses (S)-4-amino-5-oxopentanoate = 5-aminolevulinate. It functions in the pathway porphyrin-containing compound metabolism; protoporphyrin-IX biosynthesis; 5-aminolevulinate from L-glutamyl-tRNA(Glu): step 2/2. This is Glutamate-1-semialdehyde 2,1-aminomutase from Idiomarina loihiensis (strain ATCC BAA-735 / DSM 15497 / L2-TR).